Here is a 234-residue protein sequence, read N- to C-terminus: 1-(5-phosphoribosyl)-5-[(5-phosphoribosylamino)methylideneamino] imidazole-4-carboxamide isomerase (234 aa).

D9 acts as the Proton acceptor in catalysis. The active-site Proton donor is D131.

It belongs to the HisA/HisF family.

Its subcellular location is the cytoplasm. The enzyme catalyses 1-(5-phospho-beta-D-ribosyl)-5-[(5-phospho-beta-D-ribosylamino)methylideneamino]imidazole-4-carboxamide = 5-[(5-phospho-1-deoxy-D-ribulos-1-ylimino)methylamino]-1-(5-phospho-beta-D-ribosyl)imidazole-4-carboxamide. It participates in amino-acid biosynthesis; L-histidine biosynthesis; L-histidine from 5-phospho-alpha-D-ribose 1-diphosphate: step 4/9. The polypeptide is 1-(5-phosphoribosyl)-5-[(5-phosphoribosylamino)methylideneamino] imidazole-4-carboxamide isomerase (Staphylococcus aureus (strain MRSA252)).